We begin with the raw amino-acid sequence, 95 residues long: Envelope glycoprotein N (95 aa).

Residues 1–26 form the signal peptide; that stretch reads MGLMDIHNAVCSLVIGVAILIATSQA. Residues 27-55 are Virion surface-facing; the sequence is TFVDWGSSITSMGDFWESTCSAVGVSIAF. Residues 56–76 traverse the membrane as a helical segment; sequence SSGFSVLFYMGLVAVISALLA. The Intravirion segment spans residues 77 to 95; it reads GSYHACFRLFTADMFKEEW.

The protein belongs to the herpesviridae glycoprotein N family. Interacts (via N-terminus) with gM (via N-terminus). The gM-gN heterodimer forms the gCII complex.

Its subcellular location is the virion membrane. The protein resides in the host membrane. The protein localises to the host Golgi apparatus. It is found in the host trans-Golgi network. Envelope glycoprotein necessary for proper maturation of gM and modulation of its membrane fusion activity. Also plays a critical role in virion morphogenesis. The polypeptide is Envelope glycoprotein N (Gallus gallus (Chicken)).